We begin with the raw amino-acid sequence, 192 residues long: Cytidylate kinase (192 aa).

Residue 7–15 (GPAGSGKST) participates in ATP binding.

The protein belongs to the cytidylate kinase family. Type 2 subfamily.

The protein localises to the cytoplasm. The catalysed reaction is CMP + ATP = CDP + ADP. It catalyses the reaction dCMP + ATP = dCDP + ADP. The polypeptide is Cytidylate kinase (Natronomonas pharaonis (strain ATCC 35678 / DSM 2160 / CIP 103997 / JCM 8858 / NBRC 14720 / NCIMB 2260 / Gabara) (Halobacterium pharaonis)).